A 190-amino-acid polypeptide reads, in one-letter code: A-type ATP synthase subunit E (190 aa).

Belongs to the V-ATPase E subunit family. In terms of assembly, has multiple subunits with at least A(3), B(3), C, D, E, F, H, I and proteolipid K(x).

The protein localises to the cell membrane. Component of the A-type ATP synthase that produces ATP from ADP in the presence of a proton gradient across the membrane. The protein is A-type ATP synthase subunit E of Pyrobaculum neutrophilum (strain DSM 2338 / JCM 9278 / NBRC 100436 / V24Sta) (Thermoproteus neutrophilus).